The primary structure comprises 424 residues: PDZ and LIM domain protein 7 (424 aa).

A PDZ domain is found at 1 to 85 (MDSFKVVLEG…RLSLSLSRAQ (85 aa)). Residue Ser78 is modified to Phosphoserine. A compositionally biased stretch (polar residues) spans 81 to 98 (LSRAQPAQSKPQKVQTPD). Residues 81 to 221 (LSRAQPAQSK…HTQPATPTPM (141 aa)) are disordered. Position 96 is a phosphothreonine (Thr96). The segment covering 110–123 (SKQRLMEDTEDWRP) has biased composition (basic and acidic residues). Pro residues predominate over residues 174 to 187 (EPWPGPTTPSPTSR). The segment covering 204–221 (KTSTVLTRHTQPATPTPM) has biased composition (polar residues). 3 LIM zinc-binding domains span residues 247–305 (PVCH…VRYA), 306–365 (PSCA…MFGT), and 366–424 (KCRG…FSHV).

In terms of assembly, binds via its LIM zinc-binding 3 domain (LIM 3) domain to endocytic codes of INSR, but not with those of IGF1R, LDLR, TFRC, or EGFR. Interacts with various PKC isoforms through the LIM zinc-binding domains. Binds to RET in a phosphorylation-independent manner via its LIM zinc-binding 2 domain (LIM 2). Probably part of a complex with SHC and the RET dimer. Interacts with TPM2, TBX4 and TBX5.

It localises to the cytoplasm. The protein localises to the cytoskeleton. In terms of biological role, may function as a scaffold on which the coordinated assembly of proteins can occur. May play a role as an adapter that, via its PDZ domain, localizes LIM-binding proteins to actin filaments of both skeletal muscle and nonmuscle tissues. Involved in both of the two fundamental mechanisms of bone formation, direct bone formation (e.g. embryonic flat bones mandible and cranium), and endochondral bone formation (e.g. embryonic long bone development). Plays a role during fracture repair. Involved in BMP6 signaling pathway. This is PDZ and LIM domain protein 7 (PDLIM7) from Bos taurus (Bovine).